Reading from the N-terminus, the 87-residue chain is Glutaredoxin (87 aa).

Positions 1-87 (MFKVYGYDSN…GFDQLREYFK (87 aa)) constitute a Glutaredoxin domain. A disulfide bond links C14 and C17.

Belongs to the glutaredoxin family.

Its function is as follows. Serves as a reducing agent for the phage-induced ribonucleotide reductase, but not for the bacterial ones. This specificity may be the result of sequence differences around the redox-active disulfide bond. The oxidized form accepts electrons from bacterial glutathione and will, in turn, reduce other small disulfides. Can also be reduced by NADPH and by bacterial thioredoxin reductase. This chain is Glutaredoxin (NRDC), found in Enterobacteria phage T4 (Bacteriophage T4).